A 168-amino-acid polypeptide reads, in one-letter code: Phosphopantetheine adenylyltransferase (168 aa).

Residue threonine 14 participates in substrate binding. ATP contacts are provided by residues 14–15 (TF) and histidine 22. The substrate site is built by lysine 46, leucine 78, and arginine 92. ATP-binding positions include 93–95 (GLR), glutamate 103, and 128–134 (YSFISSS).

Belongs to the bacterial CoaD family. Homohexamer. Requires Mg(2+) as cofactor.

The protein localises to the cytoplasm. The enzyme catalyses (R)-4'-phosphopantetheine + ATP + H(+) = 3'-dephospho-CoA + diphosphate. Its pathway is cofactor biosynthesis; coenzyme A biosynthesis; CoA from (R)-pantothenate: step 4/5. Its function is as follows. Reversibly transfers an adenylyl group from ATP to 4'-phosphopantetheine, yielding dephospho-CoA (dPCoA) and pyrophosphate. The protein is Phosphopantetheine adenylyltransferase of Xanthomonas axonopodis pv. citri (strain 306).